The following is a 485-amino-acid chain: MDLFMPEIIILITALLVIITDLFLTKSKRHLAYLSLLGLGAAAVATVLNWDSPPELAFGGMWALDGYASFFRILFISLSGLVIMASVDYVNKFRRFQGEYYALVLLALLGMIMMASTTNLITMYLSLELAGLAFYVLVGFLKDQHSSESALKYLLLGGVASAMLVFGLVLIYGFSGETNLGSILNYIQTLPSGMDITAHTGFILGIILTITGLGFKVAAVPFQFWAPDVYQGSPTPITLYLSIASKAAGFALFLRLFYTVFTDPLALSQEWALIVAVLATAGMTLGNVLAIPQKNIKRMLGYSSIAHAGYILVALAAVGNSPELADGRISLLFYLVAFAVSDLVAFVSIIAISRSTGSDEIPSYEGLAKTNPVYASALTLALLSLTGFPPLAGFLAKYYIFSAAVQADLLWLMIVAAVNTVISAVFYFNVIRVMWLRQPREEVRVLASWPLKLALGISGLAVLIFGIIPETLLNLIEKATELIIH.

A run of 14 helical transmembrane segments spans residues leucine 3 to phenylalanine 23, histidine 30 to tryptophan 50, tyrosine 67 to valine 87, phenylalanine 96 to serine 116, leucine 120 to phenylalanine 140, leucine 154 to phenylalanine 174, phenylalanine 202 to phenylalanine 222, alanine 247 to leucine 267, tryptophan 271 to isoleucine 291, methionine 299 to glycine 319, leucine 332 to isoleucine 352, alanine 375 to leucine 395, tryptophan 411 to isoleucine 431, and leucine 453 to leucine 473.

Belongs to the complex I subunit 2 family. As to quaternary structure, NDH-1 is composed of 14 different subunits. Subunits NuoA, H, J, K, L, M, N constitute the membrane sector of the complex.

The protein localises to the cell membrane. The catalysed reaction is a quinone + NADH + 5 H(+)(in) = a quinol + NAD(+) + 4 H(+)(out). Functionally, NDH-1 shuttles electrons from NADH, via FMN and iron-sulfur (Fe-S) centers, to quinones in the respiratory chain. The immediate electron acceptor for the enzyme in this species is believed to be ubiquinone. Couples the redox reaction to proton translocation (for every two electrons transferred, four hydrogen ions are translocated across the cytoplasmic membrane), and thus conserves the redox energy in a proton gradient. In Dehalococcoides mccartyi (strain ATCC BAA-2100 / JCM 16839 / KCTC 5957 / BAV1), this protein is NADH-quinone oxidoreductase subunit N.